The primary structure comprises 430 residues: Glutamate-1-semialdehyde 2,1-aminomutase (430 aa).

N6-(pyridoxal phosphate)lysine is present on Lys-267.

Belongs to the class-III pyridoxal-phosphate-dependent aminotransferase family. HemL subfamily. Homodimer. Pyridoxal 5'-phosphate is required as a cofactor.

The protein localises to the cytoplasm. The catalysed reaction is (S)-4-amino-5-oxopentanoate = 5-aminolevulinate. The protein operates within porphyrin-containing compound metabolism; protoporphyrin-IX biosynthesis; 5-aminolevulinate from L-glutamyl-tRNA(Glu): step 2/2. The polypeptide is Glutamate-1-semialdehyde 2,1-aminomutase (Anaeromyxobacter dehalogenans (strain 2CP-C)).